The primary structure comprises 747 residues: Internal virion protein gp15 (747 aa).

This sequence belongs to the T7virus internal virion protein gp15 family. Homooctamer. Interacts with gp16; after ejection the gp15-gp16 complex composed of a gp15 octamer and a gp16 tetramer probably binds both the viral DNA and the host inner membrane. Interacts with gp14.

The protein localises to the virion. The protein resides in the host periplasm. Functionally, component of the cylindrical core that assembles on the inner surface of the capsid during capsid formation and plays a role in viral DNA ejection into the host cell. The inner core is composed of stacked rings of gp14, gp15 and gp16 proteins. Following binding to the host cell surface, the internal core is disassembled and gp15 is ejected along with gp14 and gp16 into the infected cell. Gp15 probably remains associated with gp16. The gp15-gp16 complex binds to both the viral DNA and the host inner membrane, probably escorting the leading end of the genome through the periplasm and controlling the extend of DNA translocated into the host cell. The polypeptide is Internal virion protein gp15 (Escherichia phage T7 (Bacteriophage T7)).